The chain runs to 360 residues: Mannonate dehydratase (360 aa).

This sequence belongs to the mannonate dehydratase family. The cofactor is Fe(2+). Mn(2+) serves as cofactor.

It carries out the reaction D-mannonate = 2-dehydro-3-deoxy-D-gluconate + H2O. It participates in carbohydrate metabolism; pentose and glucuronate interconversion. In terms of biological role, catalyzes the dehydration of D-mannonate. This Thermotoga neapolitana protein is Mannonate dehydratase (uxuA).